Here is a 179-residue protein sequence, read N- to C-terminus: PP2C-like domain-containing protein R307 (179 aa).

Residues 1–176 enclose the PPM-type phosphatase domain; that stretch reads MNESKRENIQ…DNVSVIIIFF (176 aa).

The protein resides in the virion. This chain is PP2C-like domain-containing protein R307, found in Acanthamoeba polyphaga mimivirus (APMV).